A 391-amino-acid polypeptide reads, in one-letter code: ATP-sensitive inward rectifier potassium channel 1 (391 aa).

The Cytoplasmic segment spans residues 1-77 (MGASERSVFR…IWTTVLDLKW (77 aa)). Position 44 is a phosphoserine; by SGK1 (Ser44). A helical membrane pass occupies residues 78–102 (RYKMTVFITAFLGSWFLFGLLWYVV). Residues 103–127 (AYVHKDLPEFYPPDNRTPCVENING) lie on the Extracellular side of the membrane. Asn117 carries an N-linked (GlcNAc...) asparagine glycan. Positions 128 to 139 (MTSAFLFSLETQ) form an intramembrane region, helical; Pore-forming. An intramembrane region (pore-forming) is located at residues 140-146 (VTIGYGF). The Selectivity filter signature appears at 141-146 (TIGYGF). Over 147 to 155 (RFVTEQCAT) the chain is Extracellular. Residues 156 to 177 (AIFLLIFQSILGVIINSFMCGA) traverse the membrane as a helical segment. Residues 178 to 391 (ILAKISRPKK…EVDETDDTQM (214 aa)) are Cytoplasmic-facing. The polyphosphoinositide (PIP2)-binding stretch occupies residues 180 to 207 (AKISRPKKRAKTITFSKNAVISKRGGKL). Position 223–230 (223–230 (GSHIYGKL)) interacts with ATP.

It belongs to the inward rectifier-type potassium channel (TC 1.A.2.1) family. KCNJ1 subfamily. In terms of assembly, interacts with SGK1 and SLC9A3R2/NHERF2. Phosphorylation at Ser-44 by SGK1 is necessary for its expression at the cell membrane. As to expression, mainly in kidney (renal cortex, medulla and papilla). Kidney.

It is found in the cell membrane. It carries out the reaction K(+)(in) = K(+)(out). Its activity is regulated as follows. Inhibited by WNK3. Activated by phosphatidylinositol 4,5 biphosphate (PtdIns(4,5)P2). Functionally, inward rectifier potassium channels are characterized by a greater tendency to allow potassium to flow into the cell rather than out of it. Their voltage dependence is regulated by the concentration of extracellular potassium; as external potassium is raised, the voltage range of the channel opening shifts to more positive voltages. The inward rectification is mainly due to the blockage of outward current by internal magnesium. This channel is activated by internal ATP and can be blocked by external barium. In the kidney, probably plays a major role in potassium homeostasis. Its function is as follows. Inward rectifier potassium channels are characterized by a greater tendency to allow potassium to flow into the cell rather than out of it. Their voltage dependence is regulated by the concentration of extracellular potassium; as external potassium is raised, the voltage range of the channel opening shifts to more positive voltages. This chain is ATP-sensitive inward rectifier potassium channel 1 (Kcnj1), found in Rattus norvegicus (Rat).